The primary structure comprises 332 residues: L-lactate dehydrogenase A chain (332 aa).

Residues 29 to 57 (GMVG…MEEK) and arginine 99 each bind NAD(+). Substrate is bound by residues arginine 106, asparagine 138, and arginine 169. Residue asparagine 138 coordinates NAD(+). The active-site Proton acceptor is the histidine 193. Threonine 248 contacts substrate.

It belongs to the LDH/MDH superfamily. LDH family. In terms of assembly, homotetramer.

It is found in the cytoplasm. It carries out the reaction (S)-lactate + NAD(+) = pyruvate + NADH + H(+). It participates in fermentation; pyruvate fermentation to lactate; (S)-lactate from pyruvate: step 1/1. Its function is as follows. Interconverts simultaneously and stereospecifically pyruvate and lactate with concomitant interconversion of NADH and NAD(+). This chain is L-lactate dehydrogenase A chain (ldha), found in Lycodichthys dearborni (Antarctic eelpout).